A 343-amino-acid polypeptide reads, in one-letter code: Melanoma-associated antigen B18 (343 aa).

A compositionally biased stretch (basic residues) spans 1–17; it reads MPRGQKSKLRAREKRHQ. The tract at residues 1-102 is disordered; it reads MPRGQKSKLR…LGSSREAEGW (102 aa). Residues 67 to 87 show a composition bias toward polar residues; sequence APSTTNAIAPVSCSSNEGASS. A compositionally biased stretch (basic and acidic residues) spans 88-102; sequence QDEKSLGSSREAEGW. The interval 100–343 is interaction with LNX1; sequence EGWKEDPLNK…TTSSSFSHAK (244 aa). The MAGE domain occupies 107–306; sequence LNKKVVSLVH…SAFPSCYEEA (200 aa). Residues 313–343 form a disordered region; the sequence is RTQARAAARAHTAAMANARSRTTSSSFSHAK. The segment covering 316–333 has biased composition (low complexity); it reads ARAAARAHTAAMANARSR. Positions 334 to 343 are enriched in polar residues; that stretch reads TTSSSFSHAK.

In terms of assembly, interacts with LNX1.

It localises to the cytoplasm. Its function is as follows. May enhance ubiquitin ligase activity of RING-type zinc finger-containing E3 ubiquitin-protein ligases. Proposed to act through recruitment and/or stabilization of the Ubl-conjugating enzyme (E2) at the E3:substrate complex. In Homo sapiens (Human), this protein is Melanoma-associated antigen B18 (MAGEB18).